A 493-amino-acid polypeptide reads, in one-letter code: Cobyric acid synthase (493 aa).

Positions 261 to 455 constitute a GATase cobBQ-type domain; it reads HTRIAVVAYP…LHGLFEDAAV (195 aa). Cys-342 functions as the Nucleophile in the catalytic mechanism. His-447 is an active-site residue.

This sequence belongs to the CobB/CobQ family. CobQ subfamily.

Its pathway is cofactor biosynthesis; adenosylcobalamin biosynthesis. In terms of biological role, catalyzes amidations at positions B, D, E, and G on adenosylcobyrinic A,C-diamide. NH(2) groups are provided by glutamine, and one molecule of ATP is hydrogenolyzed for each amidation. The chain is Cobyric acid synthase from Acidovorax sp. (strain JS42).